The sequence spans 241 residues: Protocatechuate 3,4-dioxygenase beta chain (241 aa).

Fe cation is bound by residues Tyr109, Tyr148, His161, and His163.

Belongs to the intradiol ring-cleavage dioxygenase family. The enzyme is an oligomer of 12 copies of the alpha and beta chains. It depends on Fe(3+) as a cofactor.

The enzyme catalyses 3,4-dihydroxybenzoate + O2 = 3-carboxy-cis,cis-muconate + 2 H(+). The protein operates within aromatic compound metabolism; beta-ketoadipate pathway; 3-carboxy-cis,cis-muconate from 3,4-dihydroxybenzoate: step 1/1. Plays an essential role in the utilization of numerous aromatic and hydroaromatic compounds via the beta-ketoadipate pathway. This Acinetobacter baylyi (strain ATCC 33305 / BD413 / ADP1) protein is Protocatechuate 3,4-dioxygenase beta chain (pcaH).